The primary structure comprises 113 residues: U11-theraphotoxin-Hhn1m (113 aa).

The signal sequence occupies residues 1 to 21; the sequence is MNTVRGTFLLVFGLAASLGQA. Positions 22-74 are excised as a propeptide; sequence DKNENRREMQKKTEQGKSYLNFAENLLLQKLEELEAKLLEKHSKKSKNSRQKR. Intrachain disulfides connect C75-C90, C82-C95, and C89-C110.

It belongs to the neurotoxin 14 (magi-1) family. 01 (HNTX-16) subfamily. In terms of tissue distribution, expressed by the venom gland.

The protein resides in the secreted. Probable ion channel inhibitor. The chain is U11-theraphotoxin-Hhn1m from Cyriopagopus hainanus (Chinese bird spider).